The primary structure comprises 127 residues: Aspartate 1-decarboxylase (127 aa).

Residue serine 25 is the Schiff-base intermediate with substrate; via pyruvic acid of the active site. Serine 25 carries the pyruvic acid (Ser) modification. Threonine 57 is a substrate binding site. Catalysis depends on tyrosine 58, which acts as the Proton donor. 73–75 (GAA) is a substrate binding site.

This sequence belongs to the PanD family. Heterooctamer of four alpha and four beta subunits. Pyruvate is required as a cofactor. In terms of processing, is synthesized initially as an inactive proenzyme, which is activated by self-cleavage at a specific serine bond to produce a beta-subunit with a hydroxyl group at its C-terminus and an alpha-subunit with a pyruvoyl group at its N-terminus.

Its subcellular location is the cytoplasm. The enzyme catalyses L-aspartate + H(+) = beta-alanine + CO2. It functions in the pathway cofactor biosynthesis; (R)-pantothenate biosynthesis; beta-alanine from L-aspartate: step 1/1. Catalyzes the pyruvoyl-dependent decarboxylation of aspartate to produce beta-alanine. The sequence is that of Aspartate 1-decarboxylase from Bacillus cereus (strain 03BB102).